Here is a 382-residue protein sequence, read N- to C-terminus: Protein delta homolog 2 (382 aa).

Positions 1 to 26 (MPSGCRCLNLVCLLCILGATSQPARA) are cleaved as a signal peptide. 4 consecutive EGF-like domains span residues 27 to 58 (DDCSSHCDLAHGCCAPDGSCRCDPGWEGLHCE), 62 to 89 (RMPGCQHGTCHQPWQCICHSGWAGKFCD), 91 to 129 (DEHICTSQSPCQNGGQCVYDGGGEYHCVCLPGFHGRGCE), and 131 to 172 (KAGP…AHCE). Residues 27 to 305 (DDCSSHCDLA…RQESGLGESS (279 aa)) lie on the Extracellular side of the membrane. 17 disulfides stabilise this stretch: C29–C40, C33–C46, C48–C57, C66–C71, C79–C88, C95–C107, C101–C117, C119–C128, C135–C148, C142–C160, C162–C171, C178–C189, C183–C198, C200–C209, C216–C227, C221–C236, and C238–C247. A glycan (N-linked (GlcNAc...) asparagine) is linked at N157. Residues 174–210 (NVDDCLMRPCANGATCIDGINRFSCLCPEGFAGRFCT) form the EGF-like 5; calcium-binding domain. In terms of domain architecture, EGF-like 6; calcium-binding spans 212–248 (NLDDCASRPCQRGARCRDRVHDFDCLCPSGYGGKTCE). A helical transmembrane segment spans residues 306–326 (LVALVVFGSLTAALVLATVLL). Topologically, residues 327-382 (TLRAWRRGICPTGPCCYPAPHYAPARQDQECQVSMLPAGFPLSPDLPPEPGKTTAL) are cytoplasmic.

Detected in a number of tissues including lung, brain, adrenal gland, testis, adult liver, placenta, ovary and thymus. Not detected in fetal liver or in adult spleen, muscle and heart.

Its subcellular location is the membrane. Functionally, regulates adipogenesis. In Mus musculus (Mouse), this protein is Protein delta homolog 2 (Dlk2).